Consider the following 1019-residue polypeptide: Insulin-degrading enzyme (1019 aa).

A Zn(2+)-binding site is contributed by His108. Glu111 functions as the Proton acceptor in the catalytic mechanism. Zn(2+) contacts are provided by His112 and Glu189. Lys192 carries the N6-succinyllysine modification. Position 359 to 363 (359 to 363) interacts with substrate; the sequence is LVGGQ. Residue Arg429 participates in ATP binding. Lys697 is modified (N6-succinyllysine). Residues 853–858 carry the SlyX motif motif; it reads EKPPHY. 895–901 provides a ligand contact to ATP; the sequence is DKPKKLS.

Belongs to the peptidase M16 family. In terms of assembly, homodimer. Can also form homotetramers. Zn(2+) serves as cofactor. Detected in brain and liver (at protein level). Detected in liver.

It is found in the cytoplasm. The protein localises to the cytosol. It localises to the cell membrane. The protein resides in the secreted. It catalyses the reaction Degradation of insulin, glucagon and other polypeptides. No action on proteins.. Its activity is regulated as follows. Activated by ATP, other nucleotide triphosphates and small peptides. Inhibited by bacitracin. Functionally, plays a role in the cellular breakdown of insulin, APP peptides, IAPP peptides, natriuretic peptides, glucagon, bradykinin, kallidin, and other peptides, and thereby plays a role in intercellular peptide signaling. Substrate binding induces important conformation changes, making it possible to bind and degrade larger substrates, such as insulin. Contributes to the regulation of peptide hormone signaling cascades and regulation of blood glucose homeostasis via its role in the degradation of insulin, glucagon and IAPP. Plays a role in the degradation and clearance of APP-derived amyloidogenic peptides that are secreted by neurons and microglia. Degrades the natriuretic peptides ANP, BNP and CNP, inactivating their ability to raise intracellular cGMP. Also degrades an aberrant frameshifted 40-residue form of NPPA (fsNPPA) which is associated with familial atrial fibrillation in heterozygous patients. Involved in antigen processing. Produces both the N terminus and the C terminus of MAGEA3-derived antigenic peptide (EVDPIGHLY) that is presented to cytotoxic T lymphocytes by MHC class I. The polypeptide is Insulin-degrading enzyme (Ide) (Mus musculus (Mouse)).